We begin with the raw amino-acid sequence, 261 residues long: Malonyl-[acyl-carrier protein] O-methyltransferase (261 aa).

The protein belongs to the methyltransferase superfamily.

It carries out the reaction malonyl-[ACP] + S-adenosyl-L-methionine = malonyl-[ACP] methyl ester + S-adenosyl-L-homocysteine. It participates in cofactor biosynthesis; biotin biosynthesis. Converts the free carboxyl group of a malonyl-thioester to its methyl ester by transfer of a methyl group from S-adenosyl-L-methionine (SAM). It allows to synthesize pimeloyl-ACP via the fatty acid synthetic pathway. This chain is Malonyl-[acyl-carrier protein] O-methyltransferase, found in Bacteroides thetaiotaomicron (strain ATCC 29148 / DSM 2079 / JCM 5827 / CCUG 10774 / NCTC 10582 / VPI-5482 / E50).